Reading from the N-terminus, the 214-residue chain is MEKRESSGGSGSGDAEVRKGPWTMEEDLILINYIANHGEGVWNSLAKSAGLKRTGKSCRLRWLNYLRPDVRRGNITPEEQLTIMELHAKWGNRWSKIAKHLPGRTDNEIKNFWRTKIQKYIIKSGETTTVGSQSSEFINHHATTSHVMNDTQETMDMYSPTTSYQHASNINQQLNYGNYVPESGSIMMPLSVDQSEQNYWSVDDLWPMNIYNGN.

2 consecutive HTH myb-type domains span residues 14 to 66 and 67 to 121; these read DAEV…LNYL and RPDV…QKYI. DNA-binding regions (H-T-H motif) lie at residues 42–66 and 94–117; these read WNSL…LNYL and WSKI…RTKI.

As to quaternary structure, interacts (via N-terminus) with TIFY10A/JAZ1, TIFY5A/JAZ8 AND TIFY3A/JAZ11. As to expression, expressed specifically in flowers. Expressed in all four whorls of the flower and in the vascular tissue of stamen filament and sepals. Detected in male and female gametophytes, especially in microspores and ovules. Weakly expressed in petals and the upper part of pistils.

It localises to the nucleus. Its function is as follows. Transcription factor acting redundantly with MYB21 and MYB57 to control stamen filament elongation in the late developed flowers. Contributes with MYB21 to induction of MYB108 by jasmonate. Repressed at the transcript levels by DELLA proteins. The polypeptide is Transcription factor MYB24 (MYB24) (Arabidopsis thaliana (Mouse-ear cress)).